The chain runs to 178 residues: Large ribosomal subunit protein uL6 (178 aa).

It belongs to the universal ribosomal protein uL6 family. As to quaternary structure, part of the 50S ribosomal subunit.

In terms of biological role, this protein binds to the 23S rRNA, and is important in its secondary structure. It is located near the subunit interface in the base of the L7/L12 stalk, and near the tRNA binding site of the peptidyltransferase center. In Francisella tularensis subsp. tularensis (strain FSC 198), this protein is Large ribosomal subunit protein uL6.